A 211-amino-acid polypeptide reads, in one-letter code: Protein-L-isoaspartate O-methyltransferase (211 aa).

Ser60 is a catalytic residue.

It belongs to the methyltransferase superfamily. L-isoaspartyl/D-aspartyl protein methyltransferase family.

Its subcellular location is the cytoplasm. The catalysed reaction is [protein]-L-isoaspartate + S-adenosyl-L-methionine = [protein]-L-isoaspartate alpha-methyl ester + S-adenosyl-L-homocysteine. Catalyzes the methyl esterification of L-isoaspartyl residues in peptides and proteins that result from spontaneous decomposition of normal L-aspartyl and L-asparaginyl residues. It plays a role in the repair and/or degradation of damaged proteins. The protein is Protein-L-isoaspartate O-methyltransferase of Pseudomonas fluorescens (strain Pf0-1).